Here is a 243-residue protein sequence, read N- to C-terminus: Carboxy-S-adenosyl-L-methionine synthase (243 aa).

S-adenosyl-L-methionine contacts are provided by residues Tyr-40, 65 to 67 (GCS), 90 to 91 (DN), 118 to 119 (DI), Asn-133, and Arg-200.

It belongs to the class I-like SAM-binding methyltransferase superfamily. Cx-SAM synthase family. As to quaternary structure, homodimer.

The enzyme catalyses prephenate + S-adenosyl-L-methionine = carboxy-S-adenosyl-L-methionine + 3-phenylpyruvate + H2O. Its function is as follows. Catalyzes the conversion of S-adenosyl-L-methionine (SAM) to carboxy-S-adenosyl-L-methionine (Cx-SAM). The protein is Carboxy-S-adenosyl-L-methionine synthase of Shewanella pealeana (strain ATCC 700345 / ANG-SQ1).